The primary structure comprises 948 residues: Zinc finger CCCH domain-containing protein 18 (948 aa).

The residue at position 1 (M1) is an N-acetylmethionine. The tract at residues 1 to 219 is disordered; that stretch reads MDVAESPELD…SDRKVRPRPT (219 aa). S6 carries the phosphoserine modification. Acidic residues predominate over residues 15-25; sequence EDEEQPALSDD. S33, S45, S58, S64, S71, S75, S80, and S92 each carry phosphoserine. Residues 70–86 are compositionally biased toward basic and acidic residues; it reads ASEPKSQDQDSEAHELS. Residues 95 to 105 show a composition bias toward acidic residues; that stretch reads EEGDDVEEDGT. A Phosphothreonine modification is found at T105. Phosphoserine is present on residues S106 and S114. The segment covering 106–120 has biased composition (basic and acidic residues); it reads SDLRDEASSVTRELD. Composition is skewed to acidic residues over residues 121–132 and 139–154; these read EHELDYDEEVPE and QEEEAEKAGAEEEEEK. A Phosphoserine modification is found at S169. Over residues 177-186 the composition is skewed to basic and acidic residues; the sequence is EAAKEKKKED. Residues 187–203 show a composition bias toward acidic residues; it reads DDGEIDDGEIDDDDLEE. Basic and acidic residues predominate over residues 204 to 213; sequence GEVKDPSDRK. Residues 215-241 form a C3H1-type zinc finger; that stretch reads RPRPTCRFFMKGNCTWGMSCRFIHPGV. G245 is subject to Omega-N-methylarginine. Disordered stretches follow at residues 272–296 and 388–922; these read ANPWGGPVVDEILPPPPPEPPTESA and YTEA…TLSR. A compositionally biased stretch (basic and acidic residues) spans 392–480; that stretch reads EPYHNYRERE…DREKDKEKPK (89 aa). Residues 395 to 460 are a coiled coil; that stretch reads HNYRERERER…RERAKRDEKD (66 aa). At S483 the chain carries Phosphoserine. A Glycyl lysine isopeptide (Lys-Gly) (interchain with G-Cter in SUMO2) cross-link involves residue K506. Positions 506-516 are enriched in basic and acidic residues; it reads KRADEWKDPWR. S528, S530, and S532 each carry phosphoserine. The span at 541 to 602 shows a compositional bias: low complexity; that stretch reads SASSASASNS…SRSRSFSSSP (62 aa). Residues 603–612 are compositionally biased toward pro residues; it reads SPSPTPSPHR. Residues K618 and K657 each participate in a glycyl lysine isopeptide (Lys-Gly) (interchain with G-Cter in SUMO2) cross-link. Over residues 657–666 the composition is skewed to basic and acidic residues; sequence KPGDLREARR. 2 stretches are compositionally biased toward low complexity: residues 688 to 721 and 732 to 746; these read GSSYSGSSSRSRSLSVSSVSSVSSATSSSSSVHS and ASPVSSASSRSPTPA. Residues 756–770 show a composition bias toward basic and acidic residues; that stretch reads KKEDGVREEKRRRDP. Low complexity predominate over residues 774–804; the sequence is PPKSSKAPAGGKASQQAAAPQPAVPGQPQQG. An N6-acetyllysine modification is found at K810. K813 participates in a covalent cross-link: Glycyl lysine isopeptide (Lys-Gly) (interchain with G-Cter in SUMO2). Over residues 820-837 the composition is skewed to basic and acidic residues; it reads AADKGSRKRYEPSDKDRQ. S838, S847, S863, S888, and S891 each carry phosphoserine. Positions 888–898 are enriched in polar residues; sequence SPQSKGSSKVT. Residues 902-919 are compositionally biased toward low complexity; it reads GKATDTATAGTKSGKAST. A Glycyl lysine isopeptide (Lys-Gly) (interchain with G-Cter in SUMO2) cross-link involves residue K903. Positions 916–945 form a coiled coil; sequence KASTLSRREELLKQLKAVEDAIARKRAKIP.

Interacts with ZFC3H1 in a RNase-insensitive manner.

The protein resides in the nucleus. The polypeptide is Zinc finger CCCH domain-containing protein 18 (Zc3h18) (Mus musculus (Mouse)).